Reading from the N-terminus, the 577-residue chain is Adenine deaminase (577 aa).

It belongs to the metallo-dependent hydrolases superfamily. Adenine deaminase family. Mn(2+) is required as a cofactor.

It carries out the reaction adenine + H2O + H(+) = hypoxanthine + NH4(+). In Geobacillus kaustophilus (strain HTA426), this protein is Adenine deaminase.